The chain runs to 396 residues: Flavohemoprotein (396 aa).

One can recognise a Globin domain in the interval 1-136 (MLDAQTIATV…LANVFIHREA (136 aa)). Heme b is bound at residue His-85. Catalysis depends on charge relay system residues Tyr-95 and Glu-135. The interval 147 to 396 (GGWEGTRPFR…YECFGPHKVL (250 aa)) is reductase. The FAD-binding FR-type domain maps to 150-255 (EGTRPFRIVA…AAPAGDFFMN (106 aa)). Residues Tyr-188 and 204 to 207 (RQYS) contribute to the FAD site. Residue 268–273 (GVGQTP) participates in NADP(+) binding. An FAD-binding site is contributed by 389-392 (CFGP).

This sequence belongs to the globin family. Two-domain flavohemoproteins subfamily. In the C-terminal section; belongs to the flavoprotein pyridine nucleotide cytochrome reductase family. It depends on heme b as a cofactor. Requires FAD as cofactor.

The enzyme catalyses 2 nitric oxide + NADPH + 2 O2 = 2 nitrate + NADP(+) + H(+). It catalyses the reaction 2 nitric oxide + NADH + 2 O2 = 2 nitrate + NAD(+) + H(+). Functionally, is involved in NO detoxification in an aerobic process, termed nitric oxide dioxygenase (NOD) reaction that utilizes O(2) and NAD(P)H to convert NO to nitrate, which protects the bacterium from various noxious nitrogen compounds. Therefore, plays a central role in the inducible response to nitrosative stress. This chain is Flavohemoprotein, found in Salmonella typhi.